A 257-amino-acid polypeptide reads, in one-letter code: Adenylate kinase (257 aa).

Residue 51–56 participates in ATP binding; it reads GAGKGT. An NMP region spans residues 71–100; it reads ATGDMLRSQVAKKTELGKEAKKIMDQGGLV. Residues threonine 72, arginine 77, 98-100, 127-130, and glutamine 134 each bind AMP; these read GLV and GFPR. Residues 168–205 form an LID region; that stretch reads GRLVHPASGRSYHKIFNPPKQEMKDDITGEPLIQRSDD. Residues arginine 169 and 178–179 each bind ATP; that span reads SY. The AMP site is built by arginine 202 and arginine 213. Glutamine 241 provides a ligand contact to ATP.

This sequence belongs to the adenylate kinase family. AK2 subfamily. Monomer.

The protein localises to the cytoplasm. The protein resides in the cytosol. It is found in the mitochondrion intermembrane space. It catalyses the reaction AMP + ATP = 2 ADP. Its function is as follows. Catalyzes the reversible transfer of the terminal phosphate group between ATP and AMP. Plays an important role in cellular energy homeostasis and in adenine nucleotide metabolism. Adenylate kinase activity is critical for regulation of the phosphate utilization and the AMP de novo biosynthesis pathways. The chain is Adenylate kinase (adk1) from Aspergillus terreus (strain NIH 2624 / FGSC A1156).